Consider the following 62-residue polypeptide: Large ribosomal subunit protein eL37 (62 aa).

Residues C20, C23, C35, and C38 each coordinate Zn(2+). Residues 20–38 (CRRCGRHAFNVAKGYCAAC) form a C4-type zinc finger.

Belongs to the eukaryotic ribosomal protein eL37 family. Zn(2+) is required as a cofactor.

Its function is as follows. Binds to the 23S rRNA. In Staphylothermus marinus (strain ATCC 43588 / DSM 3639 / JCM 9404 / F1), this protein is Large ribosomal subunit protein eL37.